Here is a 129-residue protein sequence, read N- to C-terminus: Transcriptional activator protein (129 aa).

Residues 1 to 12 are compositionally biased toward low complexity; that stretch reads MRSSSPSQPPSI. Residues 1–21 are disordered; sequence MRSSSPSQPPSIKKAHRQAKR. The short motif at 13–28 is the Nuclear localization signal element; the sequence is KKAHRQAKRRAIRRRR. The segment at 33–50 is a zinc-finger region; the sequence is CGCSIYFHIDCTGHGFTH. The tract at residues 84–114 is disordered; it reads IHQNEDIPCTNTVQPQPEESVASPQSLPELP. Positions 92–109 are enriched in polar residues; it reads CTNTVQPQPEESVASPQS. A transactivation region spans residues 115–129; it reads SLDDFDDSFWVNLFK.

Belongs to the geminiviridae transcriptional activator protein family. As to quaternary structure, monomer. Homodimer. Homooligomer. Self-interaction correlates with nuclear localization and efficient activation of transcription. Monomers suppress local silencing by interacting with and inactivating host adenosine kinase 2 (ADK2) in the cytoplasm. Interacts with and inhibits host SNF1 kinase. Binds to ssDNA. Phosphorylated.

It is found in the host nucleus. The protein localises to the host cytoplasm. Its function is as follows. Strong activator of the late viral genes promoters. Enhances the expression of the capsid protein and nuclear shuttle protein. Acts as a suppressor of RNA-mediated gene silencing, also known as post-transcriptional gene silencing (PTGS), a mechanism of plant viral defense that limits the accumulation of viral RNAs. Suppresses the host RNA silencing by inhibiting adenosine kinase 2 (ADK2), a kinase involved in a general methylation pathway. Also suppresses the host basal defense by interacting with and inhibiting SNF1 kinase, a key regulator of cell metabolism implicated in innate antiviral defense. Determines pathogenicity. In Abutilon (Upland cotton), this protein is Transcriptional activator protein.